The following is a 162-amino-acid chain: Large ribosomal subunit protein uL10 (162 aa).

It belongs to the universal ribosomal protein uL10 family. Part of the ribosomal stalk of the 50S ribosomal subunit. The N-terminus interacts with L11 and the large rRNA to form the base of the stalk. The C-terminus forms an elongated spine to which L12 dimers bind in a sequential fashion forming a multimeric L10(L12)X complex.

Forms part of the ribosomal stalk, playing a central role in the interaction of the ribosome with GTP-bound translation factors. This is Large ribosomal subunit protein uL10 (rplJ) from Mycoplasma genitalium (strain ATCC 33530 / DSM 19775 / NCTC 10195 / G37) (Mycoplasmoides genitalium).